Here is a 447-residue protein sequence, read N- to C-terminus: MCDVVNEIELARARCENKTAGNVTSGCKGMWDIIACWPSAKVGEHVVIPCPNYFRHFSDHHEGNLSKTCTADGWTEMDPMEIAVYCGYNLNGTVDDDSFFRSVKIGYTIGHSVSLISLTTAIVILCMSRKLHCTRNYIHMHLFVSFILKAIAVFVKDAVLYDVIQESDNCSTASVGCKAVIVFFQYCIMASFFWLLVEGLYLHALLAVSFFSERKYFWWYILIGWGGPTIFIMAWSFAKAYFNDVGCWDIIENSDLFWWIIKTPILASILMNFILFICIIRILRQKINCPDIGRNESNQYSRLAKSTLLLIPLFGINFIIFAFIPENIKTELRLVFDLILGSFQGFVVAVLYCFLNGEVQAEIKRKWRRWHLERFLGPDTKYQHPSMGSNGNNFSTQISMLTRCSPKTRRASTCQDETSITVLGSTTMGYGHQNETVKGHEDVREVS.

The Extracellular portion of the chain corresponds to 1–103; the sequence is MCDVVNEIEL…VDDDSFFRSV (103 aa). Intrachain disulfides connect Cys15-Cys36, Cys27-Cys69, and Cys50-Cys86. N-linked (GlcNAc...) asparagine glycans are attached at residues Asn17, Asn22, Asn64, and Asn91. The chain crosses the membrane as a helical span at residues 104–128; that stretch reads KIGYTIGHSVSLISLTTAIVILCMS. Residues 129–135 lie on the Cytoplasmic side of the membrane; it reads RKLHCTR. The helical transmembrane segment at 136–155 threads the bilayer; that stretch reads NYIHMHLFVSFILKAIAVFV. At 156 to 178 the chain is on the extracellular side; it reads KDAVLYDVIQESDNCSTASVGCK. A glycan (N-linked (GlcNAc...) asparagine) is linked at Asn169. A disulfide bridge connects residues Cys177 and Cys247. Residues 179 to 202 traverse the membrane as a helical segment; the sequence is AVIVFFQYCIMASFFWLLVEGLYL. Topologically, residues 203 to 216 are cytoplasmic; that stretch reads HALLAVSFFSERKY. The helical transmembrane segment at 217–238 threads the bilayer; it reads FWWYILIGWGGPTIFIMAWSFA. The Extracellular segment spans residues 239 to 256; it reads KAYFNDVGCWDIIENSDL. Residues 257-280 traverse the membrane as a helical segment; sequence FWWIIKTPILASILMNFILFICII. The Cytoplasmic portion of the chain corresponds to 281–305; it reads RILRQKINCPDIGRNESNQYSRLAK. The helical transmembrane segment at 306 to 325 threads the bilayer; the sequence is STLLLIPLFGINFIIFAFIP. The Extracellular portion of the chain corresponds to 326–337; the sequence is ENIKTELRLVFD. The helical transmembrane segment at 338 to 357 threads the bilayer; it reads LILGSFQGFVVAVLYCFLNG. The Cytoplasmic segment spans residues 358-447; the sequence is EVQAEIKRKW…KGHEDVREVS (90 aa).

The protein belongs to the G-protein coupled receptor 2 family.

The protein resides in the cell membrane. Functionally, this is a receptor for VIP. The activity of this receptor is mediated by G proteins which activate adenylyl cyclase. The chain is Vasoactive intestinal polypeptide receptor (vipr1) from Carassius auratus (Goldfish).